The following is a 396-amino-acid chain: Na(+)/H(+) antiporter NhaA (396 aa).

Helical transmembrane passes span 17-37, 59-79, 97-117, 127-147, 156-176, 181-201, 206-226, 260-280, 292-312, 333-353, and 368-388; these read FSGL…NTNF, FSLT…EIGI, ILPG…YNFI, GWAI…KILG, IFLL…IAFF, IDQY…SINY, CIYI…LSGI, SLSF…NSGI, LLPF…VFLF, IAGI…ISNL, and FSIL…LYFL.

Belongs to the NhaA Na(+)/H(+) (TC 2.A.33) antiporter family.

The protein resides in the cell membrane. The enzyme catalyses Na(+)(in) + 2 H(+)(out) = Na(+)(out) + 2 H(+)(in). Its function is as follows. Na(+)/H(+) antiporter that extrudes sodium in exchange for external protons. This Wigglesworthia glossinidia brevipalpis protein is Na(+)/H(+) antiporter NhaA.